A 410-amino-acid polypeptide reads, in one-letter code: Acetate kinase (410 aa).

Asn-7 is a binding site for Mg(2+). Lys-14 contacts ATP. Arg-88 lines the substrate pocket. The active-site Proton donor/acceptor is the Asp-145. ATP-binding positions include 203–207 (HAGNG), 278–280 (DTR), and 326–330 (GIGEN). Mg(2+) is bound at residue Glu-379.

It belongs to the acetokinase family. In terms of assembly, homodimer. Mg(2+) is required as a cofactor. The cofactor is Mn(2+).

It is found in the cytoplasm. It carries out the reaction acetate + ATP = acetyl phosphate + ADP. Its pathway is metabolic intermediate biosynthesis; acetyl-CoA biosynthesis; acetyl-CoA from acetate: step 1/2. Functionally, catalyzes the formation of acetyl phosphate from acetate and ATP. Can also catalyze the reverse reaction. This is Acetate kinase from Chlorante-Aster yellows phytoplasma.